The primary structure comprises 263 residues: MTSPLPFVAVVPARLASTRLPNKPLADLGGKPMVVRVAERAREAGAQQVLVASDAQSVLDAVREHGFDAVLTRADHPSGTDRLAEVAAKLGFSDDTIVVNVQGDEPLIDPQLVCDVASHLAAHPSCAIATAAHPIHEAHEVFNPNYVKVVLDANGVALYFSRAPIPWSRDAYLPHWPNIAAMPAPTCPVYRHIGLYAYRARFLRTYPTLAQAPIEAAEQLEQLRAMWHGERIAVLVTEHAPEAGIDTPADLERVQALFRSRAK.

Belongs to the KdsB family.

It is found in the cytoplasm. The enzyme catalyses 3-deoxy-alpha-D-manno-oct-2-ulosonate + CTP = CMP-3-deoxy-beta-D-manno-octulosonate + diphosphate. It functions in the pathway nucleotide-sugar biosynthesis; CMP-3-deoxy-D-manno-octulosonate biosynthesis; CMP-3-deoxy-D-manno-octulosonate from 3-deoxy-D-manno-octulosonate and CTP: step 1/1. The protein operates within bacterial outer membrane biogenesis; lipopolysaccharide biosynthesis. In terms of biological role, activates KDO (a required 8-carbon sugar) for incorporation into bacterial lipopolysaccharide in Gram-negative bacteria. The polypeptide is 3-deoxy-manno-octulosonate cytidylyltransferase (Burkholderia thailandensis (strain ATCC 700388 / DSM 13276 / CCUG 48851 / CIP 106301 / E264)).